The sequence spans 433 residues: 23S rRNA (uracil(1939)-C(5))-methyltransferase RlmD (433 aa).

Residues 10 to 68 (RTTTRQIITVSVNDLDSFGQGVARHNGKTLFIPGLLPQENAEVTVTEDKKQYARAKVVR) enclose the TRAM domain. Residues Cys81, Cys87, Cys90, and Cys162 each coordinate [4Fe-4S] cluster. The S-adenosyl-L-methionine site is built by Gln265, Phe294, Asn299, Glu315, Asn342, and Asp363. Cys389 serves as the catalytic Nucleophile.

This sequence belongs to the class I-like SAM-binding methyltransferase superfamily. RNA M5U methyltransferase family. RlmD subfamily.

The catalysed reaction is uridine(1939) in 23S rRNA + S-adenosyl-L-methionine = 5-methyluridine(1939) in 23S rRNA + S-adenosyl-L-homocysteine + H(+). Its function is as follows. Catalyzes the formation of 5-methyl-uridine at position 1939 (m5U1939) in 23S rRNA. The sequence is that of 23S rRNA (uracil(1939)-C(5))-methyltransferase RlmD from Escherichia coli (strain UTI89 / UPEC).